Here is a 716-residue protein sequence, read N- to C-terminus: Translation initiation factor IF-2 (716 aa).

The disordered stretch occupies residues 53-135 (GGAGVTSQKP…PLKPKKELPE (83 aa)). A compositionally biased stretch (polar residues) spans 57 to 83 (VTSQKPAETNKNKPQGINQQPAGNQPN). Low complexity predominate over residues 93–109 (VQNNQFNKNKKNNNNNK). The region spanning 217 to 386 (IRPPVVTIMG…LLVSEVEELK (170 aa)) is the tr-type G domain. Positions 226 to 233 (GHVDHGKT) are G1. 226-233 (GHVDHGKT) contacts GTP. A G2 region spans residues 251–255 (GITQH). A G3 region spans residues 272 to 275 (DTPG). GTP-binding positions include 272-276 (DTPGH) and 326-329 (NKVD). Positions 326–329 (NKVD) are G4. Positions 362–364 (SAL) are G5.

The protein belongs to the TRAFAC class translation factor GTPase superfamily. Classic translation factor GTPase family. IF-2 subfamily.

The protein resides in the cytoplasm. One of the essential components for the initiation of protein synthesis. Protects formylmethionyl-tRNA from spontaneous hydrolysis and promotes its binding to the 30S ribosomal subunits. Also involved in the hydrolysis of GTP during the formation of the 70S ribosomal complex. The protein is Translation initiation factor IF-2 of Bacillus velezensis (strain DSM 23117 / BGSC 10A6 / LMG 26770 / FZB42) (Bacillus amyloliquefaciens subsp. plantarum).